The sequence spans 34 residues: Egg-releasing peptide (34 aa).

This Aplysia californica (California sea hare) protein is Egg-releasing peptide.